A 217-amino-acid polypeptide reads, in one-letter code: Ribonuclease T (217 aa).

In terms of domain architecture, Exonuclease spans valine 20–phenylalanine 194. The Mg(2+) site is built by aspartate 23, glutamate 25, histidine 181, and aspartate 186. Histidine 181 functions as the Proton donor/acceptor in the catalytic mechanism.

The protein belongs to the RNase T family. In terms of assembly, homodimer. The cofactor is Mg(2+).

In terms of biological role, trims short 3' overhangs of a variety of RNA species, leaving a one or two nucleotide 3' overhang. Responsible for the end-turnover of tRNA: specifically removes the terminal AMP residue from uncharged tRNA (tRNA-C-C-A). Also appears to be involved in tRNA biosynthesis. The chain is Ribonuclease T from Buchnera aphidicola subsp. Baizongia pistaciae (strain Bp).